Consider the following 131-residue polypeptide: MDKLQKTLEEWKEMLDPAQYQVCRLKGTERPFSGKYNETKTEGVYHCICCNEPLFDSTTKFDSGCGWPSFYAPLEGSAVVEVRDVSHGMIRTEVVCAKCDAHLGHVFPDGPPPTGLRYCINSVCLDLVPRQ.

A MsrB domain is found at 8 to 130 (LEEWKEMLDP…NSVCLDLVPR (123 aa)). 4 residues coordinate Zn(2+): C47, C50, C96, and C99. Catalysis depends on C119, which acts as the Nucleophile.

The protein belongs to the MsrB Met sulfoxide reductase family. Zn(2+) serves as cofactor.

The catalysed reaction is L-methionyl-[protein] + [thioredoxin]-disulfide + H2O = L-methionyl-(R)-S-oxide-[protein] + [thioredoxin]-dithiol. The polypeptide is Peptide methionine sulfoxide reductase MsrB (Pseudomonas savastanoi pv. phaseolicola (strain 1448A / Race 6) (Pseudomonas syringae pv. phaseolicola (strain 1448A / Race 6))).